The primary structure comprises 408 residues: Methyltransferase/ribosomally synthesized type I borosin cyclic peptide precursor sveMA (408 aa).

The tract at residues 1 to 250 (MASSTHPKRG…TSSTFYIPPR (250 aa)) is methyltransferase domain. Active-site residues include Arg-73, Tyr-77, and Tyr-99. Residues Tyr-99, His-101, Ile-104, Ala-131, Gln-173, Gly-211, Ser-242, and Thr-244 each contribute to the S-adenosyl-L-methionine site. The tract at residues 251 to 375 (DSEAIDYDMV…GSVYKVMSAT (125 aa)) is clasp domain. Residues 371 to 385 (VMSATQADIELGKEP) are precursor leader. At Val-401 the chain carries N-methylvaline. Ile-402 is subject to N-methylisoleucine. Val-406 is modified (N-methylvaline).

It in the N-terminal section; belongs to the precorrin methyltransferase family. Homodimer. SveMA automethylates at Val-401, Ile-402 and Val-406 before being processed by a prolyloligopeptidase which likely forms a peptidyl ester upon removal of the follower propeptide, which then undergoes macrocyclization with the N-terminus of the modified core peptide. Peptide backbone alpha-N-methylations change the physicochemical properties of amide bonds to provide structural constraints and other favorable characteristics including biological membrane permeability to peptides.

It participates in secondary metabolite biosynthesis. Fusion protein of the methyltransferase sveM and a type I borosin core peptide; part of the gene cluster that mediates the biosynthesis of a type I borosin, a highly methylated cyclic peptide with potent biological activities. Type I borosins derive from the C-terminus of the fusion protein, and it is the same protein that methylates its own C-terminus using S-adenosyl methionine (SAM). The C-terminus is subsequently cleaved off and macrocyclized by a prolyloligopeptidase to give the final product. The protein is Methyltransferase/ribosomally synthesized type I borosin cyclic peptide precursor sveMA of Serendipita vermifera subsp. bescii (Mycorrhizal fungus).